Reading from the N-terminus, the 214-residue chain is ATP phosphoribosyltransferase (214 aa).

This sequence belongs to the ATP phosphoribosyltransferase family. Short subfamily. In terms of assembly, heteromultimer composed of HisG and HisZ subunits.

The protein localises to the cytoplasm. It catalyses the reaction 1-(5-phospho-beta-D-ribosyl)-ATP + diphosphate = 5-phospho-alpha-D-ribose 1-diphosphate + ATP. The protein operates within amino-acid biosynthesis; L-histidine biosynthesis; L-histidine from 5-phospho-alpha-D-ribose 1-diphosphate: step 1/9. In terms of biological role, catalyzes the condensation of ATP and 5-phosphoribose 1-diphosphate to form N'-(5'-phosphoribosyl)-ATP (PR-ATP). Has a crucial role in the pathway because the rate of histidine biosynthesis seems to be controlled primarily by regulation of HisG enzymatic activity. The chain is ATP phosphoribosyltransferase from Deinococcus deserti (strain DSM 17065 / CIP 109153 / LMG 22923 / VCD115).